A 209-amino-acid chain; its full sequence is Large ribosomal subunit protein uL3 (209 aa).

At Q150 the chain carries N5-methylglutamine.

This sequence belongs to the universal ribosomal protein uL3 family. In terms of assembly, part of the 50S ribosomal subunit. Forms a cluster with proteins L14 and L19. Methylated by PrmB.

Its function is as follows. One of the primary rRNA binding proteins, it binds directly near the 3'-end of the 23S rRNA, where it nucleates assembly of the 50S subunit. The protein is Large ribosomal subunit protein uL3 of Escherichia coli O139:H28 (strain E24377A / ETEC).